We begin with the raw amino-acid sequence, 80 residues long: Small ribosomal subunit protein bS18 (80 aa).

The protein belongs to the bacterial ribosomal protein bS18 family. In terms of assembly, part of the 30S ribosomal subunit. Forms a tight heterodimer with protein bS6.

Binds as a heterodimer with protein bS6 to the central domain of the 16S rRNA, where it helps stabilize the platform of the 30S subunit. The polypeptide is Small ribosomal subunit protein bS18 (Staphylococcus saprophyticus subsp. saprophyticus (strain ATCC 15305 / DSM 20229 / NCIMB 8711 / NCTC 7292 / S-41)).